Consider the following 394-residue polypeptide: Elongation factor Tu-A (394 aa).

In terms of domain architecture, tr-type G spans 10-204 (KPHVNVGTIG…ALDTYIPEPE (195 aa)). Positions 19–26 (GHVDHGKT) are G1. 19–26 (GHVDHGKT) serves as a coordination point for GTP. Threonine 26 provides a ligand contact to Mg(2+). The G2 stretch occupies residues 60–64 (GITIN). Residues 81–84 (DCPG) are G3. GTP is bound by residues 81–85 (DCPGH) and 136–139 (NKCD). The G4 stretch occupies residues 136 to 139 (NKCD). The G5 stretch occupies residues 174–176 (SAL).

It belongs to the TRAFAC class translation factor GTPase superfamily. Classic translation factor GTPase family. EF-Tu/EF-1A subfamily. In terms of assembly, monomer.

It localises to the cytoplasm. It catalyses the reaction GTP + H2O = GDP + phosphate + H(+). In terms of biological role, GTP hydrolase that promotes the GTP-dependent binding of aminoacyl-tRNA to the A-site of ribosomes during protein biosynthesis. This is Elongation factor Tu-A from Vibrio cholerae serotype O1 (strain ATCC 39315 / El Tor Inaba N16961).